A 338-amino-acid chain; its full sequence is GTPase Obg (338 aa).

Positions 1-159 constitute an Obg domain; it reads MQFIDQAEIE…RRIRLELKLL (159 aa). The OBG-type G domain maps to 160-328; the sequence is AEVGIIGLPN…MLQATWEQLD (169 aa). GTP contacts are provided by residues 166–173, 191–195, 213–216, 280–283, and 309–311; these read GLPNAGKS, FTTLI, DIPG, NKLD, and SAV. 2 residues coordinate Mg(2+): S173 and T193.

This sequence belongs to the TRAFAC class OBG-HflX-like GTPase superfamily. OBG GTPase family. As to quaternary structure, monomer. Mg(2+) serves as cofactor.

Its subcellular location is the cytoplasm. In terms of biological role, an essential GTPase which binds GTP, GDP and possibly (p)ppGpp with moderate affinity, with high nucleotide exchange rates and a fairly low GTP hydrolysis rate. Plays a role in control of the cell cycle, stress response, ribosome biogenesis and in those bacteria that undergo differentiation, in morphogenesis control. This Gloeothece citriformis (strain PCC 7424) (Cyanothece sp. (strain PCC 7424)) protein is GTPase Obg.